Here is a 442-residue protein sequence, read N- to C-terminus: Enolase 1 (442 aa).

The interval 73-140 (KLIAKEIVGY…YNYLGGFNAH (68 aa)) is binds human collagen. Gln-163 serves as a coordination point for (2R)-2-phosphoglycerate. The active-site Proton donor is Glu-205. Asp-242, Glu-290, and Asp-317 together coordinate Mg(2+). The (2R)-2-phosphoglycerate site is built by Lys-342, Arg-371, Ser-372, and Lys-393. Lys-342 serves as the catalytic Proton acceptor.

It belongs to the enolase family. Requires Mg(2+) as cofactor.

The protein localises to the cytoplasm. The protein resides in the secreted. Its subcellular location is the cell surface. It carries out the reaction (2R)-2-phosphoglycerate = phosphoenolpyruvate + H2O. Its pathway is carbohydrate degradation; glycolysis; pyruvate from D-glyceraldehyde 3-phosphate: step 4/5. Catalyzes the reversible conversion of 2-phosphoglycerate (2-PG) into phosphoenolpyruvate (PEP). It is essential for the degradation of carbohydrates via glycolysis. In terms of biological role, 'Moonlights' as a collagen receptor. Binds host (human) collagen, which may contribute to pathogenicity. The sequence is that of Enolase 1 from Lactiplantibacillus plantarum (strain ATCC BAA-793 / NCIMB 8826 / WCFS1) (Lactobacillus plantarum).